Reading from the N-terminus, the 44-residue chain is uncharacterized protein (44 aa).

This is an uncharacterized protein from Saccharomyces cerevisiae (strain ATCC 204508 / S288c) (Baker's yeast).